Reading from the N-terminus, the 946-residue chain is Bifunctional glutamine synthetase adenylyltransferase/adenylyl-removing enzyme (946 aa).

Residues 1–441 are adenylyl removase; sequence MSLLNDAALH…EFNWVIGDDE (441 aa). The interval 448–946 is adenylyl transferase; sequence DQALSELWAL…VIKIWEKFLD (499 aa).

The protein belongs to the GlnE family. The cofactor is Mg(2+).

The catalysed reaction is [glutamine synthetase]-O(4)-(5'-adenylyl)-L-tyrosine + phosphate = [glutamine synthetase]-L-tyrosine + ADP. The enzyme catalyses [glutamine synthetase]-L-tyrosine + ATP = [glutamine synthetase]-O(4)-(5'-adenylyl)-L-tyrosine + diphosphate. Involved in the regulation of glutamine synthetase GlnA, a key enzyme in the process to assimilate ammonia. When cellular nitrogen levels are high, the C-terminal adenylyl transferase (AT) inactivates GlnA by covalent transfer of an adenylyl group from ATP to specific tyrosine residue of GlnA, thus reducing its activity. Conversely, when nitrogen levels are low, the N-terminal adenylyl removase (AR) activates GlnA by removing the adenylyl group by phosphorolysis, increasing its activity. The regulatory region of GlnE binds the signal transduction protein PII (GlnB) which indicates the nitrogen status of the cell. The chain is Bifunctional glutamine synthetase adenylyltransferase/adenylyl-removing enzyme from Psychromonas ingrahamii (strain DSM 17664 / CCUG 51855 / 37).